Reading from the N-terminus, the 158-residue chain is Putative 4-hydroxy-4-methyl-2-oxoglutarate aldolase (158 aa).

Substrate is bound by residues 75-78 and Arg-97; that span reads GDLI. Asp-98 is an a divalent metal cation binding site.

The protein belongs to the class II aldolase/RraA-like family. As to quaternary structure, homotrimer. The cofactor is a divalent metal cation.

It catalyses the reaction 4-hydroxy-4-methyl-2-oxoglutarate = 2 pyruvate. The enzyme catalyses oxaloacetate + H(+) = pyruvate + CO2. Catalyzes the aldol cleavage of 4-hydroxy-4-methyl-2-oxoglutarate (HMG) into 2 molecules of pyruvate. Also contains a secondary oxaloacetate (OAA) decarboxylase activity due to the common pyruvate enolate transition state formed following C-C bond cleavage in the retro-aldol and decarboxylation reactions. This chain is Putative 4-hydroxy-4-methyl-2-oxoglutarate aldolase, found in Saccharopolyspora erythraea (strain ATCC 11635 / DSM 40517 / JCM 4748 / NBRC 13426 / NCIMB 8594 / NRRL 2338).